Reading from the N-terminus, the 244-residue chain is Small ribosomal subunit protein uS2 (244 aa).

This sequence belongs to the universal ribosomal protein uS2 family.

The sequence is that of Small ribosomal subunit protein uS2 from Endomicrobium trichonymphae.